Consider the following 455-residue polypeptide: Ribosomal protein uS12 methylthiotransferase RimO (455 aa).

Positions 10–126 (RKVSMISLGC…ILELIEAHDR (117 aa)) constitute an MTTase N-terminal domain. 6 residues coordinate [4Fe-4S] cluster: cysteine 19, cysteine 55, cysteine 89, cysteine 164, cysteine 168, and cysteine 171. Residues 150–380 (SSPFYSTYVK…MKAQQRVSFR (231 aa)) enclose the Radical SAM core domain. Residues 383–451 (RALIGRVEPV…EYDLIGEIVD (69 aa)) enclose the TRAM domain.

Belongs to the methylthiotransferase family. RimO subfamily. [4Fe-4S] cluster serves as cofactor.

The protein localises to the cytoplasm. The catalysed reaction is L-aspartate(89)-[ribosomal protein uS12]-hydrogen + (sulfur carrier)-SH + AH2 + 2 S-adenosyl-L-methionine = 3-methylsulfanyl-L-aspartate(89)-[ribosomal protein uS12]-hydrogen + (sulfur carrier)-H + 5'-deoxyadenosine + L-methionine + A + S-adenosyl-L-homocysteine + 2 H(+). Its function is as follows. Catalyzes the methylthiolation of an aspartic acid residue of ribosomal protein uS12. The polypeptide is Ribosomal protein uS12 methylthiotransferase RimO (Syntrophotalea carbinolica (strain DSM 2380 / NBRC 103641 / GraBd1) (Pelobacter carbinolicus)).